A 116-amino-acid polypeptide reads, in one-letter code: NADH-ubiquinone oxidoreductase chain 3 (116 aa).

3 consecutive transmembrane segments (helical) span residues 3–23 (LIMT…TVSF), 56–76 (FFLV…LLPL), and 87–107 (GTFF…IYEW).

The protein belongs to the complex I subunit 3 family.

Its subcellular location is the mitochondrion membrane. The enzyme catalyses a ubiquinone + NADH + 5 H(+)(in) = a ubiquinol + NAD(+) + 4 H(+)(out). Its function is as follows. Core subunit of the mitochondrial membrane respiratory chain NADH dehydrogenase (Complex I) that is believed to belong to the minimal assembly required for catalysis. Complex I functions in the transfer of electrons from NADH to the respiratory chain. The immediate electron acceptor for the enzyme is believed to be ubiquinone. In Carassius auratus (Goldfish), this protein is NADH-ubiquinone oxidoreductase chain 3 (MT-ND3).